Here is a 199-residue protein sequence, read N- to C-terminus: Fe/S biogenesis protein NfuA (199 aa).

2 residues coordinate [4Fe-4S] cluster: Cys-151 and Cys-154.

This sequence belongs to the NfuA family. In terms of assembly, homodimer. [4Fe-4S] cluster serves as cofactor.

Its function is as follows. Involved in iron-sulfur cluster biogenesis. Binds a 4Fe-4S cluster, can transfer this cluster to apoproteins, and thereby intervenes in the maturation of Fe/S proteins. Could also act as a scaffold/chaperone for damaged Fe/S proteins. In Xylella fastidiosa (strain M23), this protein is Fe/S biogenesis protein NfuA.